The primary structure comprises 194 residues: MYVLFEGVDGVGKSTQIEMIARAHEDSLVTKEPGGTKIGQKLREILLGGDFKLSARAEILLFLADRAEHYQKMIKPNSSRLILSDRGFVSGVAYALANDASLKIDDLLWLNSFALEGKFADKIVFFEASETLIKKRLSSRGLIDAIEARGLKYLLKVQECMKEVLKAHKFNVLYIDASEDIATINAKIENFIKF.

7-14 contributes to the ATP binding site; that stretch reads GVDGVGKS.

This sequence belongs to the thymidylate kinase family.

It carries out the reaction dTMP + ATP = dTDP + ADP. Functionally, phosphorylation of dTMP to form dTDP in both de novo and salvage pathways of dTTP synthesis. This chain is Thymidylate kinase, found in Campylobacter curvus (strain 525.92).